The following is a 118-amino-acid chain: DNA-binding protein Msp_0595 (118 aa).

The span at 15-44 (LKQQQLAAQQQQGASLEQMQQEEQARQQFE) shows a compositional bias: low complexity. The tract at residues 15 to 45 (LKQQQLAAQQQQGASLEQMQQEEQARQQFEN) is disordered.

Belongs to the PDCD5 family.

The polypeptide is DNA-binding protein Msp_0595 (Methanosphaera stadtmanae (strain ATCC 43021 / DSM 3091 / JCM 11832 / MCB-3)).